The primary structure comprises 380 residues: Alcohol dehydrogenase 3 (380 aa).

8 residues coordinate Zn(2+): cysteine 48, threonine 50, histidine 70, cysteine 100, cysteine 103, cysteine 106, cysteine 114, and cysteine 178. Threonine 50 and histidine 70 together coordinate an alcohol. Threonine 50 is an NAD(+) binding site. NAD(+) contacts are provided by residues 203–208 (GLGAVG), aspartate 227, arginine 232, threonine 273, valine 296, 296–298 (VGV), phenylalanine 323, and arginine 373.

Belongs to the zinc-containing alcohol dehydrogenase family. As to quaternary structure, homodimer. Homotetramer. The cofactor is Zn(2+).

It is found in the cytoplasm. The enzyme catalyses a primary alcohol + NAD(+) = an aldehyde + NADH + H(+). The catalysed reaction is a secondary alcohol + NAD(+) = a ketone + NADH + H(+). The sequence is that of Alcohol dehydrogenase 3 (ADH3) from Solanum tuberosum (Potato).